Reading from the N-terminus, the 338-residue chain is tRNA methyltransferase 10 homolog A (338 aa).

2 disordered regions span residues 1–91 (MSSE…DRKR) and 296–338 (RVEG…SVPH). Position 22 is a phosphoserine (serine 22). A coiled-coil region spans residues 52–80 (KQWEEQRELRKQKRKEKRKRKQLERQCQP). The span at 61–73 (RKQKRKEKRKRKQ) shows a compositional bias: basic residues. In terms of domain architecture, SAM-dependent MTase TRM10-type spans 88 to 279 (DRKRIRRDVV…TILPQRKGAV (192 aa)). Over residues 308-328 (EENRHELDSTHEEEKQDKENS) the composition is skewed to basic and acidic residues. The segment covering 329 to 338 (TESTVNSVPH) has biased composition (polar residues). Serine 335 carries the phosphoserine modification.

It belongs to the class IV-like SAM-binding methyltransferase superfamily. TRM10 family. In terms of assembly, interacts with tRNA.

It is found in the nucleus. The protein resides in the nucleolus. It carries out the reaction guanosine(9) in tRNA + S-adenosyl-L-methionine = N(1)-methylguanosine(9) in tRNA + S-adenosyl-L-homocysteine + H(+). S-adenosyl-L-methionine-dependent guanine N(1)-methyltransferase that catalyzes the formation of N(1)-methylguanine at position 9 (m1G9) in tRNAs. Probably not able to catalyze formation of N(1)-methyladenine at position 9 (m1A9) in tRNAs. The sequence is that of tRNA methyltransferase 10 homolog A (TRMT10A) from Bos taurus (Bovine).